The chain runs to 398 residues: Ornithine aminotransferase (398 aa).

Lys-256 is subject to N6-(pyridoxal phosphate)lysine.

It belongs to the class-III pyridoxal-phosphate-dependent aminotransferase family. OAT subfamily. It depends on pyridoxal 5'-phosphate as a cofactor.

The protein localises to the cytoplasm. The catalysed reaction is a 2-oxocarboxylate + L-ornithine = L-glutamate 5-semialdehyde + an L-alpha-amino acid. Its pathway is amino-acid biosynthesis; L-proline biosynthesis; L-glutamate 5-semialdehyde from L-ornithine: step 1/1. Functionally, catalyzes the interconversion of ornithine to glutamate semialdehyde. This chain is Ornithine aminotransferase, found in Oceanobacillus iheyensis (strain DSM 14371 / CIP 107618 / JCM 11309 / KCTC 3954 / HTE831).